A 152-amino-acid chain; its full sequence is Fibroblast growth factor 1 (152 aa).

An N-acetylalanine modification is found at Ala-2. Positions 2 to 15 are excised as a propeptide; that stretch reads AEGEITTFTALTEK. Asn-33 contributes to the heparin binding site. The segment at 127–143 is heparin-binding; it reads KKNGSCKRGPRTHYGQK.

It belongs to the heparin-binding growth factors family. In terms of assembly, monomer. Homodimer. Interacts with FGFR1, FGFR2, FGFR3 and FGFR4. Affinity between fibroblast growth factors (FGFs) and their receptors is increased by heparan sulfate glycosaminoglycans that function as coreceptors. Found in a complex with FGFBP1, FGF1 and FGF2. Interacts with FGFBP1. Part of a Cu(2+)-dependent multiprotein aggregate containing FGF1, S100A13 and SYT1. Interacts with SYT1. Interacts with S100A13. Interacts with LRRC59. Interacts with CSNKA, CSNKB and FIBP. While binding with LRRC59, CSNKA and FIBP seem mutually exclusive, CSNKB and FIBP may cooperatively interact with FGF1. Forms a ternary complex with FGFR1 and ITGAV:ITGB3 and induces the recruitment of PTPN11 to the complex. In the nucleus, phosphorylated by PKC/PRKCD.

It is found in the secreted. The protein resides in the cytoplasm. It localises to the cell cortex. The protein localises to the cytosol. Its subcellular location is the nucleus. Plays an important role in the regulation of cell survival, cell division, angiogenesis, cell differentiation and cell migration. Functions as a potent mitogen in vitro. Acts as a ligand for FGFR1 and integrins. Binds to FGFR1 in the presence of heparin leading to FGFR1 dimerization and activation via sequential autophosphorylation on tyrosine residues which act as docking sites for interacting proteins, leading to the activation of several signaling cascades. Binds to integrin ITGAV:ITGB3. Its binding to integrin, subsequent ternary complex formation with integrin and FGFR1, and the recruitment of PTPN11 to the complex are essential for FGF1 signaling. Induces the phosphorylation and activation of FGFR1, FRS2, MAPK3/ERK1, MAPK1/ERK2 and AKT1. Can induce angiogenesis. The polypeptide is Fibroblast growth factor 1 (FGF1) (Sus scrofa (Pig)).